The following is a 179-amino-acid chain: Ubiquinol-cytochrome c reductase iron-sulfur subunit (179 aa).

A helical membrane pass occupies residues 14–35 (FLYVATAAVGAAGVAAVAWPFI). The Rieske domain occupies 80–173 (AKEIQSEEAA…YEFVDNTKIR (94 aa)). [2Fe-2S] cluster is bound by residues cysteine 118, histidine 120, cysteine 137, and histidine 140. A disulfide bond links cysteine 123 and cysteine 139.

The protein belongs to the Rieske iron-sulfur protein family. As to quaternary structure, the main subunits of complex b-c1 are: cytochrome b, cytochrome c1 and the Rieske protein. [2Fe-2S] cluster is required as a cofactor.

The protein resides in the cell membrane. It catalyses the reaction a quinol + 2 Fe(III)-[cytochrome c](out) = a quinone + 2 Fe(II)-[cytochrome c](out) + 2 H(+)(out). Component of the ubiquinol-cytochrome c reductase complex (complex III or cytochrome b-c1 complex), which is a respiratory chain that generates an electrochemical potential coupled to ATP synthesis. The protein is Ubiquinol-cytochrome c reductase iron-sulfur subunit (petA) of Blastochloris viridis (Rhodopseudomonas viridis).